The following is a 612-amino-acid chain: Threonine--tRNA ligase (612 aa).

A catalytic region spans residues 218–509 (DHRKLGVELG…LSEHFGGNFP (292 aa)). Zn(2+)-binding residues include C310, H361, and H486.

Belongs to the class-II aminoacyl-tRNA synthetase family. As to quaternary structure, homodimer. The cofactor is Zn(2+).

The protein resides in the cytoplasm. The enzyme catalyses tRNA(Thr) + L-threonine + ATP = L-threonyl-tRNA(Thr) + AMP + diphosphate + H(+). Functionally, catalyzes the attachment of threonine to tRNA(Thr) in a two-step reaction: L-threonine is first activated by ATP to form Thr-AMP and then transferred to the acceptor end of tRNA(Thr). Also edits incorrectly charged L-seryl-tRNA(Thr). This Helicobacter pylori (strain G27) protein is Threonine--tRNA ligase.